We begin with the raw amino-acid sequence, 546 residues long: Probable protein kinase UbiB (546 aa).

The region spanning aspartate 124–leucine 502 is the Protein kinase domain. Residues leucine 130–valine 138 and lysine 153 each bind ATP. The Proton acceptor role is filled by aspartate 288. The next 2 membrane-spanning stretches (helical) occupy residues tyrosine 501–proline 521 and aspartate 522–tryptophan 542.

It belongs to the ABC1 family. UbiB subfamily.

The protein localises to the cell inner membrane. It participates in cofactor biosynthesis; ubiquinone biosynthesis [regulation]. In terms of biological role, is probably a protein kinase regulator of UbiI activity which is involved in aerobic coenzyme Q (ubiquinone) biosynthesis. In Enterobacter sp. (strain 638), this protein is Probable protein kinase UbiB.